A 1899-amino-acid chain; its full sequence is Protein TIC 214 (1899 aa).

6 consecutive transmembrane segments (helical) span residues 23 to 43 (VVVG…SYLF), 64 to 84 (FITG…HLAL), 87 to 107 (PHTI…WNNH), 124 to 144 (LSIQ…LFIL), 172 to 192 (VGWL…LVCI), and 217 to 237 (WTAR…LGVH). Disordered stretches follow at residues 256–280 (EQKK…TKKE) and 1581–1619 (PKDY…GLDL). Over residues 269 to 280 (EKTFETKETKKE) the composition is skewed to basic and acidic residues.

Belongs to the TIC214 family. In terms of assembly, part of the Tic complex.

It is found in the plastid. The protein localises to the chloroplast inner membrane. Its function is as follows. Involved in protein precursor import into chloroplasts. May be part of an intermediate translocation complex acting as a protein-conducting channel at the inner envelope. The chain is Protein TIC 214 from Ceratophyllum demersum (Rigid hornwort).